The primary structure comprises 433 residues: Enolase (433 aa).

Position 167 (Q167) interacts with (2R)-2-phosphoglycerate. The Proton donor role is filled by E209. The Mg(2+) site is built by D246, E291, and D318. (2R)-2-phosphoglycerate is bound by residues K343, R372, S373, and K394. The active-site Proton acceptor is the K343.

The protein belongs to the enolase family. In terms of assembly, component of the RNA degradosome, a multiprotein complex involved in RNA processing and mRNA degradation. It depends on Mg(2+) as a cofactor.

Its subcellular location is the cytoplasm. The protein localises to the secreted. It is found in the cell surface. It carries out the reaction (2R)-2-phosphoglycerate = phosphoenolpyruvate + H2O. Its pathway is carbohydrate degradation; glycolysis; pyruvate from D-glyceraldehyde 3-phosphate: step 4/5. Its function is as follows. Catalyzes the reversible conversion of 2-phosphoglycerate (2-PG) into phosphoenolpyruvate (PEP). It is essential for the degradation of carbohydrates via glycolysis. The chain is Enolase from Aeromonas hydrophila subsp. hydrophila (strain ATCC 7966 / DSM 30187 / BCRC 13018 / CCUG 14551 / JCM 1027 / KCTC 2358 / NCIMB 9240 / NCTC 8049).